The sequence spans 538 residues: Putative cysteine ligase BshC (538 aa).

Residues 460–484 (KINEQIELLERMLKRNVEKKHEVEL) adopt a coiled-coil conformation.

This sequence belongs to the BshC family.

Its function is as follows. Involved in bacillithiol (BSH) biosynthesis. May catalyze the last step of the pathway, the addition of cysteine to glucosamine malate (GlcN-Mal) to generate BSH. This is Putative cysteine ligase BshC from Bacillus anthracis (strain A0248).